The following is a 415-amino-acid chain: ASMFKHDHYMDNGVRYPNGDGICKQLNETKCDAGFSYDRSICEGPRYWQTISKCFIACGIGQRQSPINIVSYDAKFRQRLPKLKFKPHMEKLKTEVTNHQNRAPEFEPEDGENLYVKLNNLVDGHYKFHNLHVHNGRTRRKGSEHSVNGRFTPMEAHLVFHHDEQTHFEPTRTKLGGAFPGHNDFVVVGVFLEVGDDGFGDEPDDEECKHILKGHHPDNNENGNGDNGNNGYNGDNGNNGDNGNNGYNGDNGNNGVNGNNGYNGDNGNNGDNGNNGENGNNGENGNNGENGHKHGCRVKKAKHLSRILECAYRNDKVREFKKVGEEEGLDVHLTPEMALPPLKYRHYYTYEGSLTTPPCTESVLWVVQKCHVQVSRRVLHALRKVEGYKDGTTLRKYGTRRPTQKNKVTVYKSFK.

An N-linked (GlcNAc...) asparagine glycan is attached at N27. Positions 33 to 414 (AGFSYDRSIC…KNKVTVYKSF (382 aa)) constitute an Alpha-carbonic anhydrase domain. Positions 132, 134, and 157 each coordinate Zn(2+). Residues 201-297 (DEPDDEECKH…GENGHKHGCR (97 aa)) are disordered. Positions 207–219 (ECKHILKGHHPDN) are enriched in basic and acidic residues. The segment covering 220–289 (NENGNGDNGN…NNGENGNNGE (70 aa)) has biased composition (low complexity). 22 tandem repeats follow at residues 225 to 227 (GDN), 228 to 230 (GNN), 231 to 233 (GYN), 234 to 236 (GDN), 237 to 239 (GNN), 240 to 242 (GDN), 243 to 245 (GNN), 246 to 248 (GYN), 249 to 251 (GDN), 252 to 254 (GNN), 255 to 257 (GVN), 258 to 260 (GNN), 261 to 263 (GYN), 264 to 266 (GDN), 267 to 269 (GNN), 270 to 272 (GDN), 273 to 275 (GNN), 276 to 278 (GEN), 279 to 281 (GNN), 282 to 284 (GEN), 285 to 286 (GN), and 288 to 290 (GEN). A 22 X 3 AA approximate tandem repeats of G-X-N region spans residues 225-290 (GDNGNNGYNG…NGENGNNGEN (66 aa)). 355–356 (TT) lines the substrate pocket.

Belongs to the alpha-carbonic anhydrase family. In terms of assembly, homooligomer; disulfide-linked. May also be disulfide-linked to insoluble organic matrix. It depends on Zn(2+) as a cofactor. Expressed in the mantle.

Its subcellular location is the secreted. It is found in the extracellular space. The protein resides in the extracellular matrix. The enzyme catalyses hydrogencarbonate + H(+) = CO2 + H2O. Its function is as follows. Acts as a negative regulator for calcification in the shells of mollusks. May function both as a calcium concentrator and as a carbonic anhydrase required for production of carbonate ions, which are assembled to CaCO(3) at mineralization sites. Is important for shell formation in both the calcitic prismatic layer and the aragonitic nacreous layer. Shows inhibitory activity of crystal formation when present in free state but, when attached to the insoluble matrix, may regulate the form and size of aragonite crystal. The polypeptide is Nacrein-like protein F (Pinctada fucata (Akoya pearl oyster)).